A 515-amino-acid chain; its full sequence is Adenine DNA glycosylase (515 aa).

Positions 1 to 24 are enriched in basic residues; it reads MKKLQASVRSHKKQPANHKRRRTR. The segment at 1–38 is disordered; the sequence is MKKLQASVRSHKKQPANHKRRRTRALSSSQAKPSSLDG. The Proton donor/acceptor role is filled by Glu-105. Positions 261, 268, 271, and 277 each coordinate [4Fe-4S] cluster. The 132-residue stretch at 335-466 folds into the Nudix hydrolase domain; the sequence is PREEYSATCV…AMKKVFRMYE (132 aa). Positions 376 to 398 match the Nudix box motif; the sequence is VTLEPSEQHQHKALLQELQRWCG. Residues 468 to 494 are disordered; that stretch reads HRQGTRKGSKRSQVCPPSSRKKPSLGQ.

It belongs to the Nth/MutY family. [4Fe-4S] cluster is required as a cofactor. As to expression, expressed in heart, lung, liver, intestine, brain and thymus.

It is found in the nucleus. It localises to the mitochondrion. It carries out the reaction Hydrolyzes free adenine bases from 7,8-dihydro-8-oxoguanine:adenine mismatched double-stranded DNA, leaving an apurinic site.. Involved in oxidative DNA damage repair. Initiates repair of A*oxoG to C*G by removing the inappropriately paired adenine base from the DNA backbone. Possesses both adenine and 2-OH-A DNA glycosylase activities. The polypeptide is Adenine DNA glycosylase (Mutyh) (Mus musculus (Mouse)).